A 177-amino-acid chain; its full sequence is Inner membrane-spanning protein YciB (177 aa).

5 helical membrane-spanning segments follow: residues 22–42, 50–70, 76–96, 121–141, and 149–169; these read IFIA…IHWI, ISLF…FFHN, WKIT…QFFT, FIWS…AYYF, and FKVF…SIYI.

Belongs to the YciB family.

The protein resides in the cell inner membrane. Its function is as follows. Plays a role in cell envelope biogenesis, maintenance of cell envelope integrity and membrane homeostasis. This Buchnera aphidicola subsp. Acyrthosiphon pisum (strain APS) (Acyrthosiphon pisum symbiotic bacterium) protein is Inner membrane-spanning protein YciB.